Consider the following 401-residue polypeptide: Imidazolonepropionase (401 aa).

Histidine 66 and histidine 68 together coordinate Fe(3+). Zn(2+) contacts are provided by histidine 66 and histidine 68. Positions 75, 138, and 171 each coordinate 4-imidazolone-5-propanoate. Tyrosine 138 contacts N-formimidoyl-L-glutamate. Position 236 (histidine 236) interacts with Fe(3+). Histidine 236 serves as a coordination point for Zn(2+). 4-imidazolone-5-propanoate is bound at residue glutamine 239. Residue aspartate 311 participates in Fe(3+) binding. Aspartate 311 contributes to the Zn(2+) binding site. Residues asparagine 313 and glycine 315 each contribute to the N-formimidoyl-L-glutamate site. A 4-imidazolone-5-propanoate-binding site is contributed by threonine 316.

The protein belongs to the metallo-dependent hydrolases superfamily. HutI family. Zn(2+) is required as a cofactor. It depends on Fe(3+) as a cofactor.

It is found in the cytoplasm. The enzyme catalyses 4-imidazolone-5-propanoate + H2O = N-formimidoyl-L-glutamate. Its pathway is amino-acid degradation; L-histidine degradation into L-glutamate; N-formimidoyl-L-glutamate from L-histidine: step 3/3. Catalyzes the hydrolytic cleavage of the carbon-nitrogen bond in imidazolone-5-propanoate to yield N-formimidoyl-L-glutamate. It is the third step in the universal histidine degradation pathway. The sequence is that of Imidazolonepropionase from Pseudomonas fluorescens (strain ATCC BAA-477 / NRRL B-23932 / Pf-5).